A 434-amino-acid polypeptide reads, in one-letter code: 4-hydroxy-3-methylbut-2-en-1-yl diphosphate synthase (flavodoxin) (434 aa).

A compositionally biased stretch (polar residues) spans 1-15 (MQSEAQSPRSSQICS). The tract at residues 1 to 20 (MQSEAQSPRSSQICSTEPVF) is disordered. Cys322, Cys325, Cys368, and Glu375 together coordinate [4Fe-4S] cluster.

It belongs to the IspG family. The cofactor is [4Fe-4S] cluster.

The enzyme catalyses (2E)-4-hydroxy-3-methylbut-2-enyl diphosphate + oxidized [flavodoxin] + H2O + 2 H(+) = 2-C-methyl-D-erythritol 2,4-cyclic diphosphate + reduced [flavodoxin]. Its pathway is isoprenoid biosynthesis; isopentenyl diphosphate biosynthesis via DXP pathway; isopentenyl diphosphate from 1-deoxy-D-xylulose 5-phosphate: step 5/6. Its function is as follows. Converts 2C-methyl-D-erythritol 2,4-cyclodiphosphate (ME-2,4cPP) into 1-hydroxy-2-methyl-2-(E)-butenyl 4-diphosphate. In Burkholderia mallei (strain ATCC 23344), this protein is 4-hydroxy-3-methylbut-2-en-1-yl diphosphate synthase (flavodoxin).